A 227-amino-acid polypeptide reads, in one-letter code: MAYPFQLGFQDATSPIMEELLHFHDHTLMIVFLISSLVLYIISLMLTTKLTHTSTMDAQEVETIWTILPAIILILIALPSLRILYMMDEINNPSLTVKTMGHQWYWSYEYTDYEDLTFDSYMIPTSDLKPGELRLLEVDNRVVLPMEMTIRMLISSEDVLHSWAVPSLGLKTDAIPGRLNQTTLVSTRPGLYYGQCSEICGSNHSFMPIVLELVPLKHFEKWSASML.

Residues 1–14 lie on the Mitochondrial intermembrane side of the membrane; it reads MAYPFQLGFQDATS. The helical transmembrane segment at 15–45 threads the bilayer; it reads PIMEELLHFHDHTLMIVFLISSLVLYIISLM. The Mitochondrial matrix segment spans residues 46 to 59; it reads LTTKLTHTSTMDAQ. The chain crosses the membrane as a helical span at residues 60–87; sequence EVETIWTILPAIILILIALPSLRILYMM. Topologically, residues 88–227 are mitochondrial intermembrane; the sequence is DEINNPSLTV…HFEKWSASML (140 aa). Histidine 161, cysteine 196, glutamate 198, cysteine 200, histidine 204, and methionine 207 together coordinate Cu cation. Glutamate 198 is a binding site for Mg(2+).

The protein belongs to the cytochrome c oxidase subunit 2 family. As to quaternary structure, component of the cytochrome c oxidase (complex IV, CIV), a multisubunit enzyme composed of 14 subunits. The complex is composed of a catalytic core of 3 subunits MT-CO1, MT-CO2 and MT-CO3, encoded in the mitochondrial DNA, and 11 supernumerary subunits COX4I, COX5A, COX5B, COX6A, COX6B, COX6C, COX7A, COX7B, COX7C, COX8 and NDUFA4, which are encoded in the nuclear genome. The complex exists as a monomer or a dimer and forms supercomplexes (SCs) in the inner mitochondrial membrane with NADH-ubiquinone oxidoreductase (complex I, CI) and ubiquinol-cytochrome c oxidoreductase (cytochrome b-c1 complex, complex III, CIII), resulting in different assemblies (supercomplex SCI(1)III(2)IV(1) and megacomplex MCI(2)III(2)IV(2)). Found in a complex with TMEM177, COA6, COX18, COX20, SCO1 and SCO2. Interacts with TMEM177 in a COX20-dependent manner. Interacts with COX20. Interacts with COX16. Requires Cu cation as cofactor.

It is found in the mitochondrion inner membrane. The enzyme catalyses 4 Fe(II)-[cytochrome c] + O2 + 8 H(+)(in) = 4 Fe(III)-[cytochrome c] + 2 H2O + 4 H(+)(out). Component of the cytochrome c oxidase, the last enzyme in the mitochondrial electron transport chain which drives oxidative phosphorylation. The respiratory chain contains 3 multisubunit complexes succinate dehydrogenase (complex II, CII), ubiquinol-cytochrome c oxidoreductase (cytochrome b-c1 complex, complex III, CIII) and cytochrome c oxidase (complex IV, CIV), that cooperate to transfer electrons derived from NADH and succinate to molecular oxygen, creating an electrochemical gradient over the inner membrane that drives transmembrane transport and the ATP synthase. Cytochrome c oxidase is the component of the respiratory chain that catalyzes the reduction of oxygen to water. Electrons originating from reduced cytochrome c in the intermembrane space (IMS) are transferred via the dinuclear copper A center (CU(A)) of subunit 2 and heme A of subunit 1 to the active site in subunit 1, a binuclear center (BNC) formed by heme A3 and copper B (CU(B)). The BNC reduces molecular oxygen to 2 water molecules using 4 electrons from cytochrome c in the IMS and 4 protons from the mitochondrial matrix. The sequence is that of Cytochrome c oxidase subunit 2 (MT-CO2) from Ceratotherium simum (White rhinoceros).